Reading from the N-terminus, the 215-residue chain is 3-isopropylmalate dehydratase small subunit (215 aa).

The protein belongs to the LeuD family. LeuD type 1 subfamily. As to quaternary structure, heterodimer of LeuC and LeuD.

The enzyme catalyses (2R,3S)-3-isopropylmalate = (2S)-2-isopropylmalate. It participates in amino-acid biosynthesis; L-leucine biosynthesis; L-leucine from 3-methyl-2-oxobutanoate: step 2/4. Catalyzes the isomerization between 2-isopropylmalate and 3-isopropylmalate, via the formation of 2-isopropylmaleate. In Polynucleobacter asymbioticus (strain DSM 18221 / CIP 109841 / QLW-P1DMWA-1) (Polynucleobacter necessarius subsp. asymbioticus), this protein is 3-isopropylmalate dehydratase small subunit.